Reading from the N-terminus, the 473-residue chain is BTB/POZ domain-containing protein KCTD8 (473 aa).

A disordered region spans residues Met-1–Pro-36. Residues Ser-21–Gly-35 are compositionally biased toward low complexity. One can recognise a BTB domain in the interval Glu-44–Glu-122. Phosphoserine is present on Ser-78. Residue Arg-80 is modified to Omega-N-methylarginine. The tract at residues Ile-326–Asn-409 is disordered. Positions Lys-330–Ser-346 are enriched in basic and acidic residues. Polar residues predominate over residues Glu-347–Thr-388. Phosphoserine is present on Ser-410.

In terms of assembly, interacts as a tetramer with GABRB1 and GABRB2.

The protein localises to the presynaptic cell membrane. The protein resides in the postsynaptic cell membrane. Functionally, auxiliary subunit of GABA-B receptors that determine the pharmacology and kinetics of the receptor response. Increases agonist potency and markedly alter the G-protein signaling of the receptors by accelerating onset and promoting desensitization. This chain is BTB/POZ domain-containing protein KCTD8 (KCTD8), found in Homo sapiens (Human).